The chain runs to 830 residues: Adhesion G protein-coupled receptor E2 (830 aa).

The N-terminal stretch at 1-22 (MRHGHPRLLPGLLMLLLLPLGA) is a signal peptide. Topologically, residues 23 to 540 (AAQKTSGCAR…MAHYDVQEED (518 aa)) are extracellular. In terms of domain architecture, EGF-like 1 spans 26-68 (KTSGCARWCPPKSTCVNATTCRCSPGFSSLSGEIFSSPLESCD). 5 cysteine pairs are disulfide-bonded: cysteine 30–cysteine 40, cysteine 34–cysteine 46, cysteine 48–cysteine 67, cysteine 73–cysteine 87, and cysteine 81–cysteine 96. Asparagine 42 carries N-linked (GlcNAc...) asparagine glycosylation. The EGF-like 1; calcium-binding domain occupies 69–108 (DIDECGPPPLVSCGRLADCQNTEGSYHCMCSPGYALASGA). N-linked (GlcNAc...) asparagine glycosylation occurs at asparagine 113. The 39-residue stretch at 121-159 (DVDECQLKPRVCKSRGICTNTKGSYTCKCPPGFELNLGD) folds into the EGF-like 2; calcium-binding domain. 6 cysteine pairs are disulfide-bonded: cysteine 125-cysteine 138, cysteine 132-cysteine 147, cysteine 169-cysteine 182, cysteine 176-cysteine 191, cysteine 218-cysteine 231, and cysteine 225-cysteine 240. The 39-residue stretch at 165-203 (DVNECTSGQNPCHNSTHCLNNIGGYECRCRPGWKPVPGS) folds into the EGF-like 3; calcium-binding domain. A glycan (N-linked (GlcNAc...) asparagine) is linked at asparagine 178. The region spanning 214–253 (DVDECSSGKHTCHYSTVCINTVGSYKCRCRRGWKPKPRFQ) is the EGF-like 4; calcium-binding domain. Asparagine 258, asparagine 348, asparagine 361, and asparagine 379 each carry an N-linked (GlcNAc...) asparagine glycan. The GAIN-B domain occupies 358-537 (WTFNASAGTD…AVLMAHYDVQ (180 aa)). 2 disulfides stabilise this stretch: cysteine 489/cysteine 519 and cysteine 507/cysteine 521. A GPS region spans residues 489 to 537 (CVFWEHSQDECGHWSTRGCTVVDSGDTSTTCQCTHLSSFAVLMAHYDVQ). A helical transmembrane segment spans residues 541–561 (LVLPVITYVGLGLSLLCLLLA). Residues 562-576 (ALTFLLCKAIQNTST) lie on the Cytoplasmic side of the membrane. A helical transmembrane segment spans residues 577–597 (SLHLQLLICLFLAHLLFLMAI). Residues 598–603 (DRTEIK) are Extracellular-facing. A helical transmembrane segment spans residues 604-624 (VLCSIIAGALHYLYLASFTWM). At 625–651 (LLEGLHLFLTARNLMVVNYSSVSMLMK) the chain is on the cytoplasmic side. The chain crosses the membrane as a helical span at residues 652–672 (KLMYPVGYGVPTLIVAISAAS). The Extracellular segment spans residues 673-690 (RSHLYGTRTRCWLNPEER). Residues 691 to 711 (FIWSFLGPVCTIFSVNLGFFL) traverse the membrane as a helical segment. Residues 712–744 (MTLWILKSKLSSLNSDVSTLQNTRMLTFKAIAQ) lie on the Cytoplasmic side of the membrane. A helical membrane pass occupies residues 745–765 (LFILGCTWCLGILQVGPAAHV). The Extracellular segment spans residues 766–767 (MA). A helical transmembrane segment spans residues 768 to 788 (YLFTIINSLQGVFIFLVYCLL). Topologically, residues 789 to 830 (SQQVREEYGKWFKGIRKTRAESEKYTLSSRAMSDVNKPMMVN) are cytoplasmic.

It belongs to the G-protein coupled receptor 2 family. Adhesion G-protein coupled receptor (ADGR) subfamily. As to quaternary structure, forms a heterodimer, consisting of a large extracellular region non-covalently linked to a seven-transmembrane moiety. Interacts with chondroitin sulfate; the interaction with chondroitin sulfate is calcium-dependent. Interacts with CD55. Post-translationally, autoproteolytically cleaved into 2 subunits, an extracellular alpha subunit and a seven-transmembrane beta subunit.

It is found in the cell membrane. Its subcellular location is the cell projection. The protein resides in the ruffle membrane. Its function is as follows. Cell surface receptor that binds to the chondroitin sulfate moiety of glycosaminoglycan chains and promotes cell attachment. Promotes granulocyte chemotaxis, degranulation and adhesion. In macrophages, promotes the release of inflammatory cytokines, including IL8 and TNF. Signals probably through G-proteins. The protein is Adhesion G protein-coupled receptor E2 (ADGRE2) of Canis lupus familiaris (Dog).